The primary structure comprises 411 residues: MLDLKNLQNNFDEVAKKLKNKKVDENILKKLAELFASLKKEKIALEEFQAFQNKFSKELATAEDKESLKAKLSENKSKINEQSAKVNALENELEEIAHAIPNIPDECVPVGEDENENVELKKVLNPPSFDFTPKEHFELGESLNWLDFMRGVKISQSRFCVLKNEGALLSRALVNYMIDFNRSRGFEFVNVPFLVNGATMFGTGQLPKFKEDMYKVDDEDLYLISTSEIPVTNLYSGEILASETLPIKMTCYSACFRKEAGSAGRDTRGIIRQHQFEKVELVSITKPEQSDSVFNEMLECASDLLSSLGLAHRHLMLCTGDLGFSAAKTVDLEVWLPGQNKYREISSVSNCRDFQARRAKIRYKNEQGKNELVHTLNGSSLAVGRTLVAIMENYQDKEGKIHIPDVLKKYF.

Threonine 226–glutamate 228 serves as a coordination point for L-serine. An ATP-binding site is contributed by arginine 257–glutamate 259. Glutamate 280 lines the L-serine pocket. Residue glutamate 344–serine 347 participates in ATP binding. Serine 379 lines the L-serine pocket.

This sequence belongs to the class-II aminoacyl-tRNA synthetase family. Type-1 seryl-tRNA synthetase subfamily. As to quaternary structure, homodimer. The tRNA molecule binds across the dimer.

The protein localises to the cytoplasm. It catalyses the reaction tRNA(Ser) + L-serine + ATP = L-seryl-tRNA(Ser) + AMP + diphosphate + H(+). The enzyme catalyses tRNA(Sec) + L-serine + ATP = L-seryl-tRNA(Sec) + AMP + diphosphate + H(+). It functions in the pathway aminoacyl-tRNA biosynthesis; selenocysteinyl-tRNA(Sec) biosynthesis; L-seryl-tRNA(Sec) from L-serine and tRNA(Sec): step 1/1. Catalyzes the attachment of serine to tRNA(Ser). Is also able to aminoacylate tRNA(Sec) with serine, to form the misacylated tRNA L-seryl-tRNA(Sec), which will be further converted into selenocysteinyl-tRNA(Sec). This is Serine--tRNA ligase from Campylobacter jejuni subsp. jejuni serotype O:2 (strain ATCC 700819 / NCTC 11168).